Here is a 672-residue protein sequence, read N- to C-terminus: Spermatid perinuclear RNA-binding protein (672 aa).

Residues 5-362 (RSFANDDRHV…ALKRPFEDGV (358 aa)) enclose the DZF domain. Positions 348 to 370 (GTGSSALKRPFEDGVGDDKDPNK) are disordered. Over residues 356–370 (RPFEDGVGDDKDPNK) the composition is skewed to basic and acidic residues. The region spanning 386–452 (DLMNALMRLN…AVKVLQAMGY (67 aa)) is the DRBM 1 domain. Residues 463 to 494 (VSSDEKSDNEGKNETVSSISSNNTGNSTADTS) are disordered. Residues 465 to 475 (SDEKSDNEGKN) are compositionally biased toward basic and acidic residues. Residues 477-490 (TVSSISSNNTGNST) are compositionally biased toward low complexity. Residues 509–575 (SGKNPVMELN…ALAALEKLFS (67 aa)) form the DRBM 2 domain.

The protein resides in the cytoplasm. In terms of biological role, may be involved in normal spermatogenesis and sperm function. Binds to double-stranded DNA and RNA. This chain is Spermatid perinuclear RNA-binding protein (STRBP), found in Gallus gallus (Chicken).